The sequence spans 222 residues: Glutathione-specific gamma-glutamylcyclotransferase 1 (222 aa).

Residues 1-25 (MKQESAAQSTPPPSLSPAPSAQPSW) form a disordered region. 35–40 (IFGYGS) is a binding site for substrate. E115 acts as the Proton acceptor in catalysis.

The protein belongs to the gamma-glutamylcyclotransferase family. ChaC subfamily. Interacts with NOTCH1 (via extracellular region).

The protein resides in the cytoplasm. It localises to the cytosol. Its subcellular location is the golgi apparatus. The protein localises to the trans-Golgi network. It carries out the reaction glutathione = L-cysteinylglycine + 5-oxo-L-proline. Catalyzes the cleavage of glutathione into 5-oxo-L-proline and a Cys-Gly dipeptide. Acts specifically on glutathione, but not on other gamma-glutamyl peptides. Glutathione depletion is an important factor for apoptosis initiation and execution. Acts as a pro-apoptotic component of the unfolded protein response pathway by mediating the pro-apoptotic effects of the ATF4-ATF3-DDIT3/CHOP cascade. Negative regulator of Notch signaling pathway involved in embryonic neurogenesis: acts by inhibiting Notch cleavage by furin, maintaining Notch in an immature inactive form, thereby promoting neurogenesis in embryos. The sequence is that of Glutathione-specific gamma-glutamylcyclotransferase 1 from Rattus norvegicus (Rat).